The sequence spans 197 residues: uncharacterized protein (197 aa).

Positions 1 to 30 (MSTYIIINIALLIAIVALIFFLSKKTKSEA) are cleaved as a signal peptide.

This is an uncharacterized protein from Acanthamoeba polyphaga (Amoeba).